A 1415-amino-acid polypeptide reads, in one-letter code: DNA-directed RNA polymerase subunit beta' (1415 aa).

The Zn(2+) site is built by Cys72, Cys74, Cys87, and Cys90. Mg(2+)-binding residues include Asp463, Asp465, and Asp467. The Zn(2+) site is built by Cys811, Cys885, Cys892, and Cys895.

It belongs to the RNA polymerase beta' chain family. The RNAP catalytic core consists of 2 alpha, 1 beta, 1 beta' and 1 omega subunit. When a sigma factor is associated with the core the holoenzyme is formed, which can initiate transcription. Requires Mg(2+) as cofactor. The cofactor is Zn(2+).

It catalyses the reaction RNA(n) + a ribonucleoside 5'-triphosphate = RNA(n+1) + diphosphate. Functionally, DNA-dependent RNA polymerase catalyzes the transcription of DNA into RNA using the four ribonucleoside triphosphates as substrates. In Cereibacter sphaeroides (strain ATCC 17029 / ATH 2.4.9) (Rhodobacter sphaeroides), this protein is DNA-directed RNA polymerase subunit beta'.